The following is a 462-amino-acid chain: Na(+)/H(+) antiporter NhaA 2 (462 aa).

The tract at residues 1–31 is disordered; that stretch reads MKSSTREQTPVTSPTPHDPTPPTPPRGSTPL. The segment covering 16–27 has biased composition (pro residues); it reads PHDPTPPTPPRG. The next 11 helical transmembrane spans lie at 52–72, 96–116, 134–154, 165–185, 195–215, 218–238, 244–264, 309–329, 337–357, 382–402, and 408–428; these read IGGA…NSPW, LTLG…IAGL, LVPV…YVLV, GWAI…AVIS, FLLT…AIFY, TLAV…GLLV, SWWL…ASGI, FAVP…LSGL, VALG…LGAT, LLGG…FGAG, and HVKV…AVVL.

The protein belongs to the NhaA Na(+)/H(+) (TC 2.A.33) antiporter family.

It is found in the cell membrane. It carries out the reaction Na(+)(in) + 2 H(+)(out) = Na(+)(out) + 2 H(+)(in). In terms of biological role, na(+)/H(+) antiporter that extrudes sodium in exchange for external protons. The protein is Na(+)/H(+) antiporter NhaA 2 of Kineococcus radiotolerans (strain ATCC BAA-149 / DSM 14245 / SRS30216).